Reading from the N-terminus, the 395-residue chain is Cytochrome b561 and DOMON domain-containing protein At5g47530 (395 aa).

Residues 1–24 (MAISSNLLLCLSLFIFIITKSALA) form the signal peptide. Residues 47–162 (LDSFLHYTYD…GIINTVWQDG (116 aa)) enclose the DOMON domain. A Cytochrome b561 domain is found at 176–371 (GNNVRSVSTL…LEGFTWYVVI (196 aa)). 2 consecutive transmembrane segments (helical) span residues 210 to 230 (IHGI…AIIA) and 242 to 262 (AWFY…VAGW). Heme b is bound by residues histidine 211, histidine 247, and histidine 280. Residues 282–302 (AVGIALFCLATIQVFAMFLRP) form a helical membrane-spanning segment. Residue histidine 316 coordinates heme b. The next 2 helical transmembrane spans lie at 318–338 (TVGY…LDIL) and 351–371 (IIVV…YVVI).

Requires heme b as cofactor.

It localises to the membrane. Its function is as follows. May act as a catecholamine-responsive trans-membrane electron transporter. The polypeptide is Cytochrome b561 and DOMON domain-containing protein At5g47530 (Arabidopsis thaliana (Mouse-ear cress)).